The chain runs to 524 residues: Rho guanine nucleotide exchange factor 3 (524 aa).

Residues 75–98 are disordered; the sequence is SDSRPDLFSPRPWSRNTPAANTKR. One can recognise a DH domain in the interval 121-303; that stretch reads IKRQEAIFEL…IQGIVAEINI (183 aa). The PH domain maps to 290 to 448; it reads AINIIQGIVA…QWLNCIRQAK (159 aa).

The protein resides in the cytoplasm. Functionally, acts as a guanine nucleotide exchange factor (GEF) for RhoA and RhoB GTPases. The protein is Rho guanine nucleotide exchange factor 3 (Arhgef3) of Gallus gallus (Chicken).